We begin with the raw amino-acid sequence, 1127 residues long: Genome polyprotein (1127 aa).

The tract at residues Met-1 to Met-15 is interaction with host EXOC1. Over Met-1 to Thr-101 the chain is Cytoplasmic. A hydrophobic; homodimerization of capsid protein C region spans residues Met-37–Ile-72. Positions Thr-101 to Ala-114 are cleaved as a propeptide — ER anchor for the capsid protein C, removed in mature form by serine protease NS3. The helical transmembrane segment at Ala-102–Gly-122 threads the bilayer. Topologically, residues Glu-123–Glu-238 are extracellular. Residue Asn-183 is glycosylated (N-linked (GlcNAc...) asparagine; by host). A helical membrane pass occupies residues Thr-239–Gly-259. The Cytoplasmic segment spans residues Thr-260–Arg-265. A helical transmembrane segment spans residues Gly-266 to Thr-280. Residues Met-281–Gly-725 are Extracellular-facing. 4 cysteine pairs are disulfide-bonded: Cys-283/Cys-310, Cys-340/Cys-401, Cys-354/Cys-385, and Cys-372/Cys-396. N-linked (GlcNAc...) asparagine; by host glycosylation is present at Asn-347. The fusion peptide stretch occupies residues Asp-378–Gly-391. N-linked (GlcNAc...) asparagine; by host glycosylation is present at Asn-433. 2 disulfide bridges follow: Cys-465/Cys-565 and Cys-582/Cys-613. The chain crosses the membrane as a helical span at residues Ala-726–Ile-746. Topologically, residues Gly-747 to Ser-754 are cytoplasmic. The chain crosses the membrane as a helical span at residues Leu-755–Val-773. The Extracellular segment spans residues Gln-774 to Ala-1127. Cystine bridges form between Cys-779/Cys-790, Cys-830/Cys-918, Cys-954/Cys-998, Cys-1055/Cys-1104, and Cys-1066/Cys-1088. N-linked (GlcNAc...) asparagine; by host glycans are attached at residues Asn-905 and Asn-982.

In terms of assembly, homodimer. Interacts (via N-terminus) with host EXOC1 (via C-terminus); this interaction results in EXOC1 degradation through the proteasome degradation pathway. Forms heterodimers with envelope protein E in the endoplasmic reticulum and Golgi. As to quaternary structure, homodimer; in the endoplasmic reticulum and Golgi. Interacts with protein prM. Interacts with non-structural protein 1. In terms of assembly, homodimer; Homohexamer when secreted. Interacts with envelope protein E. Post-translationally, specific enzymatic cleavages in vivo yield mature proteins. Cleavages in the lumen of endoplasmic reticulum are performed by host signal peptidase, wereas cleavages in the cytoplasmic side are performed by the Serine protease NS3. Signal cleavage at the 2K-4B site requires a prior NS3 protease-mediated cleavage at the 4A-2K site. In terms of processing, cleaved in post-Golgi vesicles by a host furin, releasing the mature small envelope protein M, and peptide pr. This cleavage is incomplete as up to 30% of viral particles still carry uncleaved prM. N-glycosylated. Post-translationally, N-glycosylated. The excreted form is glycosylated and this is required for efficient secretion of the protein from infected cells.

The protein resides in the virion. It is found in the host nucleus. It localises to the host cytoplasm. Its subcellular location is the host perinuclear region. The protein localises to the secreted. The protein resides in the virion membrane. It is found in the host endoplasmic reticulum membrane. In terms of biological role, plays a role in virus budding by binding to the cell membrane and gathering the viral RNA into a nucleocapsid that forms the core of a mature virus particle. During virus entry, may induce genome penetration into the host cytoplasm after hemifusion induced by the surface proteins. Can migrate to the cell nucleus where it modulates host functions. Overcomes the anti-viral effects of host EXOC1 by sequestering and degrading the latter through the proteasome degradation pathway. Its function is as follows. Inhibits RNA silencing by interfering with host Dicer. Functionally, prevents premature fusion activity of envelope proteins in trans-Golgi by binding to envelope protein E at pH6.0. After virion release in extracellular space, gets dissociated from E dimers. Acts as a chaperone for envelope protein E during intracellular virion assembly by masking and inactivating envelope protein E fusion peptide. prM is the only viral peptide matured by host furin in the trans-Golgi network probably to avoid catastrophic activation of the viral fusion activity in acidic GolGi compartment prior to virion release. prM-E cleavage is inefficient, and many virions are only partially matured. These uncleaved prM would play a role in immune evasion. In terms of biological role, may play a role in virus budding. Exerts cytotoxic effects by activating a mitochondrial apoptotic pathway through M ectodomain. May display a viroporin activity. Its function is as follows. Binds to host cell surface receptor and mediates fusion between viral and cellular membranes. Envelope protein is synthesized in the endoplasmic reticulum in the form of heterodimer with protein prM. They play a role in virion budding in the ER, and the newly formed immature particle is covered with 60 spikes composed of heterodimer between precursor prM and envelope protein E. The virion is transported to the Golgi apparatus where the low pH causes dissociation of PrM-E heterodimers and formation of E homodimers. prM-E cleavage is inefficient, and many virions are only partially matured. These uncleaved prM would play a role in immune evasion. Functionally, involved in immune evasion, pathogenesis and viral replication. Once cleaved off the polyprotein, is targeted to three destinations: the viral replication cycle, the plasma membrane and the extracellular compartment. Essential for viral replication. Required for formation of the replication complex and recruitment of other non-structural proteins to the ER-derived membrane structures. Excreted as a hexameric lipoparticle that plays a role against host immune response. Antagonizing the complement function. Binds to the host macrophages and dendritic cells. Inhibits signal transduction originating from Toll-like receptor 3 (TLR3). Disrupts the host endothelial glycocalyx layer of host pulmonary microvascular endothelial cells, inducing degradation of sialic acid and shedding of heparan sulfate proteoglycans. NS1 induces expression of sialidases, heparanase, and activates cathepsin L, which activates heparanase via enzymatic cleavage. These effects are probably linked to the endothelial hyperpermeability observed in severe dengue disease. The polypeptide is Genome polyprotein (Dengue virus type 2 (strain China/D2-04) (DENV-2)).